Consider the following 540-residue polypeptide: Eukaryotic translation initiation factor 3 subunit L (540 aa).

The PCI domain maps to T307–H515.

It belongs to the eIF-3 subunit L family. As to quaternary structure, component of the eukaryotic translation initiation factor 3 (eIF-3) complex. The eIF-3 complex interacts with pix.

Its subcellular location is the cytoplasm. Functionally, component of the eukaryotic translation initiation factor 3 (eIF-3) complex, which is involved in protein synthesis of a specialized repertoire of mRNAs and, together with other initiation factors, stimulates binding of mRNA and methionyl-tRNAi to the 40S ribosome. The eIF-3 complex specifically targets and initiates translation of a subset of mRNAs involved in cell proliferation. This Drosophila grimshawi (Hawaiian fruit fly) protein is Eukaryotic translation initiation factor 3 subunit L.